The primary structure comprises 387 residues: Sharpin (387 aa).

A self-association region spans residues 1–180; sequence MAPPAGGAAA…EREELAGSLA (180 aa). Residues 122–132 show a composition bias toward polar residues; the sequence is EGQNGSKSNSP. The tract at residues 122-169 is disordered; it reads EGQNGSKSNSPPALGPEACPVSLPSPPEASTLKGPPPEADLPRSPGNL. Residue Ser-165 is modified to Phosphoserine. Residues 175-310 are interaction with SHANK1; the sequence is LAGSLARAIA…SAPREAPATG (136 aa). The Ubiquitin-like domain maps to 219–288; that stretch reads IRLQVTLEDA…PERSLASYGV (70 aa). Residues 305–349 are disordered; the sequence is EAPATGPSPQHPQKMDGELGRLFPPSLGLPPGPQPAASSLPSPLQ. At Ser-312 the chain carries Phosphoserine. Positions 339–349 are enriched in low complexity; sequence PAASSLPSPLQ. The RanBP2-type zinc finger occupies 348-377; that stretch reads LQPSWSCPSCTFINAPDRPGCEMCSTQRPC.

In terms of assembly, monomer and homodimer. Component of the LUBAC complex (linear ubiquitin chain assembly complex) which consists of SHARPIN, RBCK1 and RNF31. LUBAC has a MW of approximately 600 kDa suggesting a heteromultimeric assembly of its subunits. Associates with the TNF-R1 signaling complex (TNF-RSC) in a stimulation-dependent manner. Interacts with EYA1, EYA2, SHANK1 and SHANK3 (via ANK repeats). As to expression, highly expressed in skeletal muscle and placenta and at lower levels in brain, heart, colon without mucosa, thymus, spleen, kidney, liver, small intestine, lung and peripheral blood leukocytes. Up-regulated in various tumor tissues such as kidney, liver, ovary and pancreas tumors.

Its subcellular location is the cytoplasm. It is found in the cytosol. The protein localises to the synapse. It functions in the pathway protein modification; protein ubiquitination. Functionally, component of the LUBAC complex which conjugates linear polyubiquitin chains in a head-to-tail manner to substrates and plays a key role in NF-kappa-B activation and regulation of inflammation. LUBAC conjugates linear polyubiquitin to IKBKG and RIPK1 and is involved in activation of the canonical NF-kappa-B and the JNK signaling pathways. Linear ubiquitination mediated by the LUBAC complex interferes with TNF-induced cell death and thereby prevents inflammation. LUBAC is recruited to the TNF-R1 signaling complex (TNF-RSC) following polyubiquitination of TNF-RSC components by BIRC2 and/or BIRC3 and to conjugate linear polyubiquitin to IKBKG and possibly other components contributing to the stability of the complex. The LUBAC complex is also involved in innate immunity by conjugating linear polyubiquitin chains at the surface of bacteria invading the cytosol to form the ubiquitin coat surrounding bacteria. LUBAC is not able to initiate formation of the bacterial ubiquitin coat, and can only promote formation of linear polyubiquitins on pre-existing ubiquitin. The bacterial ubiquitin coat acts as an 'eat-me' signal for xenophagy and promotes NF-kappa-B activation. Together with OTULIN, the LUBAC complex regulates the canonical Wnt signaling during angiogenesis. The protein is Sharpin of Homo sapiens (Human).